We begin with the raw amino-acid sequence, 143 residues long: Hemoglobin subunit alpha (143 aa).

Residues 2-143 (SLTARDKSVV…LSAALADKYR (142 aa)) enclose the Globin domain. H60 is an O2 binding site. H89 is a binding site for heme b.

The protein belongs to the globin family. Heterotetramer of two alpha chains and two beta chains. In terms of tissue distribution, red blood cells.

Functionally, involved in oxygen transport from gills to the various peripheral tissues. The chain is Hemoglobin subunit alpha (hba) from Salmo salar (Atlantic salmon).